Consider the following 288-residue polypeptide: Acetyl-coenzyme A carboxylase carboxyl transferase subunit beta (288 aa).

A CoA carboxyltransferase N-terminal domain is found at 32-288 (LFAKCPACKH…LELHTEVENV (257 aa)). Zn(2+) contacts are provided by cysteine 36, cysteine 39, cysteine 54, and cysteine 57. The C4-type zinc finger occupies 36–57 (CPACKHTIYQKDLGKNKVCPNC).

It belongs to the AccD/PCCB family. As to quaternary structure, acetyl-CoA carboxylase is a heterohexamer composed of biotin carboxyl carrier protein (AccB), biotin carboxylase (AccC) and two subunits each of ACCase subunit alpha (AccA) and ACCase subunit beta (AccD). Requires Zn(2+) as cofactor.

The protein resides in the cytoplasm. The enzyme catalyses N(6)-carboxybiotinyl-L-lysyl-[protein] + acetyl-CoA = N(6)-biotinyl-L-lysyl-[protein] + malonyl-CoA. It participates in lipid metabolism; malonyl-CoA biosynthesis; malonyl-CoA from acetyl-CoA: step 1/1. In terms of biological role, component of the acetyl coenzyme A carboxylase (ACC) complex. Biotin carboxylase (BC) catalyzes the carboxylation of biotin on its carrier protein (BCCP) and then the CO(2) group is transferred by the transcarboxylase to acetyl-CoA to form malonyl-CoA. The protein is Acetyl-coenzyme A carboxylase carboxyl transferase subunit beta of Lactococcus lactis subsp. cremoris (strain SK11).